Here is a 316-residue protein sequence, read N- to C-terminus: Ribosomal RNA small subunit methyltransferase H (316 aa).

Residues 35-37 (GGH), Asp55, Phe79, Asp101, and Gln108 contribute to the S-adenosyl-L-methionine site.

This sequence belongs to the methyltransferase superfamily. RsmH family.

It localises to the cytoplasm. The enzyme catalyses cytidine(1402) in 16S rRNA + S-adenosyl-L-methionine = N(4)-methylcytidine(1402) in 16S rRNA + S-adenosyl-L-homocysteine + H(+). Functionally, specifically methylates the N4 position of cytidine in position 1402 (C1402) of 16S rRNA. The protein is Ribosomal RNA small subunit methyltransferase H of Vibrio proteolyticus (Aeromonas proteolytica).